We begin with the raw amino-acid sequence, 434 residues long: Nicotinate phosphoribosyltransferase (434 aa).

H242 bears the Phosphohistidine; by autocatalysis mark.

It belongs to the NAPRTase family. In terms of processing, transiently phosphorylated on a His residue during the reaction cycle. Phosphorylation strongly increases the affinity for substrates and increases the rate of nicotinate D-ribonucleotide production. Dephosphorylation regenerates the low-affinity form of the enzyme, leading to product release.

It catalyses the reaction nicotinate + 5-phospho-alpha-D-ribose 1-diphosphate + ATP + H2O = nicotinate beta-D-ribonucleotide + ADP + phosphate + diphosphate. Its pathway is cofactor biosynthesis; NAD(+) biosynthesis; nicotinate D-ribonucleotide from nicotinate: step 1/1. Its function is as follows. Catalyzes the synthesis of beta-nicotinate D-ribonucleotide from nicotinate and 5-phospho-D-ribose 1-phosphate at the expense of ATP. This chain is Nicotinate phosphoribosyltransferase, found in Bartonella tribocorum (strain CIP 105476 / IBS 506).